We begin with the raw amino-acid sequence, 187 residues long: Resolvase OPG149 (187 aa).

The protein belongs to the RuvC family. Poxviruses-type subfamily. Requires Mg(2+) as cofactor.

In terms of biological role, plays a role in DNA replication by cleaving viral DNA concatamers to yield unit-length viral genomes. The concatamer junctions contain inverted repeat sequences that can be extruded as cruciforms, yielding Holliday junctions that A22 protein cleaves. The polypeptide is Resolvase OPG149 (OPG149) (Cynomys gunnisoni (Gunnison's prairie dog)).